Consider the following 871-residue polypeptide: Serrate RNA effector molecule homolog (871 aa).

The disordered stretch occupies residues 1–90 (MGDSDDEYDR…RRDWDGHSSD (90 aa)). Gly-2 is modified (N-acetylglycine). Ser-4 carries the phosphoserine modification. The residue at position 8 (Tyr-8) is a Phosphotyrosine. The span at 8-73 (YDRRRRDKFR…ERFSPPRHEL (66 aa)) shows a compositional bias: basic and acidic residues. Phosphoserine occurs at positions 67, 74, and 136. Lys-150 is covalently cross-linked (Glycyl lysine isopeptide (Lys-Gly) (interchain with G-Cter in SUMO2)). The interval 272-411 (EEEEQAGKPG…KPKDAAGLEC (140 aa)) is disordered. Basic and acidic residues predominate over residues 297–347 (DGERKTNDKDEKKEDSKQAENDSSNDDKTKKSEGDGDKEEKKEDSEKEAKK). The span at 370-385 (SESESESGQAEEEKEE) shows a compositional bias: acidic residues. Residues 386-411 (AEALKEKEKPKEEEWEKPKDAAGLEC) are compositionally biased toward basic and acidic residues. Phosphoserine is present on residues Ser-492 and Ser-539. Position 543 is a phosphothreonine (Thr-543). Ser-569 bears the Phosphoserine mark. The interval 574-597 (ELLGSSGGAPPEEPPKEGNPAEIN) is disordered. Position 670 is a phosphothreonine (Thr-670). At Ser-678 the chain carries Phosphoserine. 3 positions are modified to omega-N-methylarginine: Arg-828, Arg-835, and Arg-845. A disordered region spans residues 830-849 (NYDAFRGQGGYPGKPRNRMV).

This sequence belongs to the ARS2 family. Interacts with CASP8AP2, ERBB4, NCBP1/CBP80 and DROSHA. Interacts with LUZP4. Interacts with NCBP2/CBP20 and NCBP3. Interacts with MTREX.

It localises to the nucleus. The protein resides in the nucleoplasm. The protein localises to the cytoplasm. Its function is as follows. Acts as a mediator between the cap-binding complex (CBC) and the primary microRNAs (miRNAs) processing machinery during cell proliferation. Contributes to the stability and delivery of capped primary miRNA transcripts to the primary miRNA processing complex containing DGCR8 and DROSHA, thereby playing a role in RNA-mediated gene silencing (RNAi) by miRNAs. Binds capped RNAs (m7GpppG-capped RNA); however interaction is probably mediated via its interaction with NCBP1/CBP80 component of the CBC complex. Involved in cell cycle progression at S phase. Does not directly confer arsenite resistance but rather modulates arsenic sensitivity. Independently of its activity on miRNAs, necessary and sufficient to promote neural stem cell self-renewal. Does so by directly binding SOX2 promoter and positively regulating its transcription. The polypeptide is Serrate RNA effector molecule homolog (SRRT) (Pongo abelii (Sumatran orangutan)).